The following is a 201-amino-acid chain: LexA repressor 1 (201 aa).

Positions 27–47 (LAEIAQAFGFASRNAAQKHVQ) form a DNA-binding region, H-T-H motif. Active-site for autocatalytic cleavage activity residues include Ser122 and Lys159.

Belongs to the peptidase S24 family. In terms of assembly, homodimer.

It catalyses the reaction Hydrolysis of Ala-|-Gly bond in repressor LexA.. Represses a number of genes involved in the response to DNA damage (SOS response), including recA and lexA. In the presence of single-stranded DNA, RecA interacts with LexA causing an autocatalytic cleavage which disrupts the DNA-binding part of LexA, leading to derepression of the SOS regulon and eventually DNA repair. In Xanthomonas campestris pv. campestris (strain ATCC 33913 / DSM 3586 / NCPPB 528 / LMG 568 / P 25), this protein is LexA repressor 1.